The sequence spans 103 residues: Small ribosomal subunit protein uS10 (103 aa).

This sequence belongs to the universal ribosomal protein uS10 family. As to quaternary structure, part of the 30S ribosomal subunit.

Functionally, involved in the binding of tRNA to the ribosomes. The chain is Small ribosomal subunit protein uS10 from Sulfurovum sp. (strain NBC37-1).